Here is a 349-residue protein sequence, read N- to C-terminus: Anthranilate phosphoribosyltransferase (349 aa).

Residues Gly86, 89–90, Thr94, 96–99, 114–122, and Ser126 each bind 5-phospho-alpha-D-ribose 1-diphosphate; these read GD, NIST, and KHGNKSASG. Anthranilate is bound at residue Gly86. Ser98 contributes to the Mg(2+) binding site. Asn117 lines the anthranilate pocket. Position 172 (Arg172) interacts with anthranilate. The Mg(2+) site is built by Asp231 and Glu232.

The protein belongs to the anthranilate phosphoribosyltransferase family. Homodimer. Mg(2+) serves as cofactor.

It carries out the reaction N-(5-phospho-beta-D-ribosyl)anthranilate + diphosphate = 5-phospho-alpha-D-ribose 1-diphosphate + anthranilate. The protein operates within amino-acid biosynthesis; L-tryptophan biosynthesis; L-tryptophan from chorismate: step 2/5. In terms of biological role, catalyzes the transfer of the phosphoribosyl group of 5-phosphorylribose-1-pyrophosphate (PRPP) to anthranilate to yield N-(5'-phosphoribosyl)-anthranilate (PRA). This chain is Anthranilate phosphoribosyltransferase, found in Prochlorococcus marinus (strain MIT 9312).